The primary structure comprises 43 residues: Defensin (43 aa).

3 cysteine pairs are disulfide-bonded: cysteine 3–cysteine 34, cysteine 20–cysteine 39, and cysteine 24–cysteine 41.

The protein belongs to the invertebrate defensin family. Type 1 subfamily.

It is found in the secreted. Functionally, antibacterial peptide. Affects Gram-positive bacteria M.luteus, B.megaterium, A.viridans, S.aureus and S.saprophyticus. Moderate activity against P.acidilactici and B.subtilis QB935. Also affects Gram-negative bacterium, D22 form of E.coli. This Pyrrhocoris apterus (Sap sucking bug) protein is Defensin.